The primary structure comprises 264 residues: Thymidylate synthase (264 aa).

Residues R21 and 126 to 127 (RR) contribute to the dUMP site. The active-site Nucleophile is the C146. DUMP-binding positions include 166 to 169 (RSAD), N177, and 207 to 209 (HLY). D169 is a (6R)-5,10-methylene-5,6,7,8-tetrahydrofolate binding site. A263 provides a ligand contact to (6R)-5,10-methylene-5,6,7,8-tetrahydrofolate.

The protein belongs to the thymidylate synthase family. Bacterial-type ThyA subfamily. In terms of assembly, homodimer.

Its subcellular location is the cytoplasm. It catalyses the reaction dUMP + (6R)-5,10-methylene-5,6,7,8-tetrahydrofolate = 7,8-dihydrofolate + dTMP. It participates in pyrimidine metabolism; dTTP biosynthesis. Its function is as follows. Catalyzes the reductive methylation of 2'-deoxyuridine-5'-monophosphate (dUMP) to 2'-deoxythymidine-5'-monophosphate (dTMP) while utilizing 5,10-methylenetetrahydrofolate (mTHF) as the methyl donor and reductant in the reaction, yielding dihydrofolate (DHF) as a by-product. This enzymatic reaction provides an intracellular de novo source of dTMP, an essential precursor for DNA biosynthesis. The chain is Thymidylate synthase from Bradyrhizobium sp. (strain BTAi1 / ATCC BAA-1182).